Consider the following 521-residue polypeptide: Glutamate--tRNA ligase (521 aa).

Positions 30–40 (PSPTGYLHVGG) match the 'HIGH' region motif. The 'KMSKS' region motif lies at 277–281 (KLSKR). Position 280 (Lys-280) interacts with ATP.

Belongs to the class-I aminoacyl-tRNA synthetase family. Glutamate--tRNA ligase type 1 subfamily. As to quaternary structure, monomer.

Its subcellular location is the cytoplasm. It carries out the reaction tRNA(Glu) + L-glutamate + ATP = L-glutamyl-tRNA(Glu) + AMP + diphosphate. Functionally, catalyzes the attachment of glutamate to tRNA(Glu) in a two-step reaction: glutamate is first activated by ATP to form Glu-AMP and then transferred to the acceptor end of tRNA(Glu). This Chlorobium phaeovibrioides (strain DSM 265 / 1930) (Prosthecochloris vibrioformis (strain DSM 265)) protein is Glutamate--tRNA ligase.